We begin with the raw amino-acid sequence, 408 residues long: Arginine biosynthesis bifunctional protein ArgJ (408 aa).

Residues T156, K182, T193, E279, N403, and T408 each contribute to the substrate site. The active-site Nucleophile is the T193.

Belongs to the ArgJ family. In terms of assembly, heterotetramer of two alpha and two beta chains.

It is found in the cytoplasm. The catalysed reaction is N(2)-acetyl-L-ornithine + L-glutamate = N-acetyl-L-glutamate + L-ornithine. The enzyme catalyses L-glutamate + acetyl-CoA = N-acetyl-L-glutamate + CoA + H(+). The protein operates within amino-acid biosynthesis; L-arginine biosynthesis; L-ornithine and N-acetyl-L-glutamate from L-glutamate and N(2)-acetyl-L-ornithine (cyclic): step 1/1. It participates in amino-acid biosynthesis; L-arginine biosynthesis; N(2)-acetyl-L-ornithine from L-glutamate: step 1/4. Its function is as follows. Catalyzes two activities which are involved in the cyclic version of arginine biosynthesis: the synthesis of N-acetylglutamate from glutamate and acetyl-CoA as the acetyl donor, and of ornithine by transacetylation between N(2)-acetylornithine and glutamate. The polypeptide is Arginine biosynthesis bifunctional protein ArgJ (Methylococcus capsulatus (strain ATCC 33009 / NCIMB 11132 / Bath)).